A 293-amino-acid chain; its full sequence is Formamidopyrimidine-DNA glycosylase (293 aa).

The active-site Schiff-base intermediate with DNA is Pro-2. The active-site Proton donor is Glu-3. The active-site Proton donor; for beta-elimination activity is the Lys-58. His-104, Arg-123, and Lys-166 together coordinate DNA. Residues 257–293 (AVYDRESEPCRTKGCGGVVKRFVQNGRSTFCCPKCQK) form an FPG-type zinc finger. Arg-283 serves as the catalytic Proton donor; for delta-elimination activity.

The protein belongs to the FPG family. Monomer. Zn(2+) serves as cofactor.

It carries out the reaction Hydrolysis of DNA containing ring-opened 7-methylguanine residues, releasing 2,6-diamino-4-hydroxy-5-(N-methyl)formamidopyrimidine.. It catalyses the reaction 2'-deoxyribonucleotide-(2'-deoxyribose 5'-phosphate)-2'-deoxyribonucleotide-DNA = a 3'-end 2'-deoxyribonucleotide-(2,3-dehydro-2,3-deoxyribose 5'-phosphate)-DNA + a 5'-end 5'-phospho-2'-deoxyribonucleoside-DNA + H(+). Involved in base excision repair of DNA damaged by oxidation or by mutagenic agents. Acts as a DNA glycosylase that recognizes and removes damaged bases. Has a preference for oxidized purines, such as 7,8-dihydro-8-oxoguanine (8-oxoG). Has AP (apurinic/apyrimidinic) lyase activity and introduces nicks in the DNA strand. Cleaves the DNA backbone by beta-delta elimination to generate a single-strand break at the site of the removed base with both 3'- and 5'-phosphates. This Rhodopseudomonas palustris (strain BisA53) protein is Formamidopyrimidine-DNA glycosylase.